The primary structure comprises 344 residues: Putative voltage-gated potassium channel subunit beta (344 aa).

NADP(+) is bound by residues Trp-33, Asp-62, Tyr-67, Ser-167, Gln-193, Trp-222, Ser-223, Pro-224, Leu-225, Lys-233, Arg-243, Gly-301, Ser-303, Gln-307, Glu-310, and Asn-311. The active-site Proton donor/acceptor is Tyr-67.

The protein belongs to the shaker potassium channel beta subunit family. Forms heteromultimeric complexes with potassium channel alpha subunits.

It localises to the cytoplasm. The protein localises to the nucleus. Functionally, probable accessory potassium channel protein which modulates the activity of the pore-forming alpha subunit. The sequence is that of Putative voltage-gated potassium channel subunit beta from Schizosaccharomyces pombe (strain 972 / ATCC 24843) (Fission yeast).